The following is an 873-amino-acid chain: Bifunctional levopimaradiene synthase, chloroplastic (873 aa).

The N-terminal 59 residues, 1 to 59 (MAGVLFANLPCSLQLSPKVPFRQSTNILIPFHKRSSFGFNAQHCVRSHLRLRWNCVGIH), are a transit peptide targeting the chloroplast. Lys-271 serves as a coordination point for substrate. Mg(2+) contacts are provided by Asp-405 and Asp-407. The short motif at 405-408 (DVDD) is the DXDD motif element. Lys-492 provides a ligand contact to substrate. Residues Asp-624, Asp-628, Asn-769, Thr-773, and Glu-777 each contribute to the Mg(2+) site. Residues 624–628 (DDLYD) carry the DDXXD motif motif.

This sequence belongs to the terpene synthase family. Tpsd subfamily. The cofactor is Mg(2+). Expressed in roots.

Its subcellular location is the plastid. The protein resides in the chloroplast. The catalysed reaction is (2E,6E,10E)-geranylgeranyl diphosphate = (+)-copalyl diphosphate. It catalyses the reaction (+)-copalyl diphosphate = abieta-8(14),12-diene + diphosphate. Its pathway is terpene metabolism; ginkgolide biosynthesis. Functionally, catalyzes the initial cyclization step in the biosynthesis of ginkgolides, a structurally unique family of diterpenoids that are highly specific platelet-activating-factor receptor antagonists. Bifunctional enzyme that catalyzes two sequential cyclizations of geranylgeranyl diphosphate (GGPP) to levopimaradiene. This Ginkgo biloba (Ginkgo) protein is Bifunctional levopimaradiene synthase, chloroplastic (LPS).